We begin with the raw amino-acid sequence, 470 residues long: 6-phospho-beta-galactosidase (470 aa).

The D-galactose 6-phosphate site is built by Gln-19, His-116, Asn-159, Glu-160, and Asn-297. Catalysis depends on Glu-160, which acts as the Proton donor. Glu-375 acts as the Nucleophile in catalysis. D-galactose 6-phosphate is bound by residues Ser-430, Trp-431, Lys-437, and Tyr-439.

It belongs to the glycosyl hydrolase 1 family.

The catalysed reaction is a 6-phospho-beta-D-galactoside + H2O = D-galactose 6-phosphate + an alcohol. The protein operates within carbohydrate metabolism; lactose degradation; D-galactose 6-phosphate and beta-D-glucose from lactose 6-phosphate: step 1/1. The polypeptide is 6-phospho-beta-galactosidase (Staphylococcus aureus (strain COL)).